Reading from the N-terminus, the 241-residue chain is GTP cyclohydrolase 1 type 2 homolog (241 aa).

5 residues coordinate a divalent metal cation: histidine 62, histidine 63, aspartate 101, histidine 207, and glutamate 211.

This sequence belongs to the GTP cyclohydrolase I type 2/NIF3 family. In terms of assembly, homohexamer.

The polypeptide is GTP cyclohydrolase 1 type 2 homolog (Campylobacter jejuni subsp. jejuni serotype O:2 (strain ATCC 700819 / NCTC 11168)).